A 447-amino-acid chain; its full sequence is N-succinylarginine dihydrolase (447 aa).

Substrate contacts are provided by residues 19–28 (AGLSFGNEAS), asparagine 110, and 137–138 (HR). Glutamate 174 is a catalytic residue. Residue arginine 212 coordinates substrate. Histidine 248 is a catalytic residue. Residues aspartate 250 and asparagine 359 each contribute to the substrate site. Catalysis depends on cysteine 365, which acts as the Nucleophile.

This sequence belongs to the succinylarginine dihydrolase family. Homodimer.

It catalyses the reaction N(2)-succinyl-L-arginine + 2 H2O + 2 H(+) = N(2)-succinyl-L-ornithine + 2 NH4(+) + CO2. It functions in the pathway amino-acid degradation; L-arginine degradation via AST pathway; L-glutamate and succinate from L-arginine: step 2/5. Functionally, catalyzes the hydrolysis of N(2)-succinylarginine into N(2)-succinylornithine, ammonia and CO(2). The protein is N-succinylarginine dihydrolase of Escherichia coli (strain ATCC 8739 / DSM 1576 / NBRC 3972 / NCIMB 8545 / WDCM 00012 / Crooks).